The following is a 289-amino-acid chain: Inorganic pyrophosphatase (289 aa).

S2 carries the post-translational modification N-acetylserine. K57 is modified (N6-acetyllysine). Mg(2+) contacts are provided by D116, D121, and D153. An N6-acetyllysine modification is found at K228. S250 carries the phosphoserine modification.

This sequence belongs to the PPase family. Homodimer. It depends on Mg(2+) as a cofactor.

The protein localises to the cytoplasm. The catalysed reaction is diphosphate + H2O = 2 phosphate + H(+). The polypeptide is Inorganic pyrophosphatase (PPA1) (Macaca fascicularis (Crab-eating macaque)).